The following is a 468-amino-acid chain: 3-isopropylmalate dehydratase large subunit (468 aa).

[4Fe-4S] cluster is bound by residues C347, C407, and C410.

Belongs to the aconitase/IPM isomerase family. LeuC type 1 subfamily. In terms of assembly, heterodimer of LeuC and LeuD. [4Fe-4S] cluster is required as a cofactor.

It carries out the reaction (2R,3S)-3-isopropylmalate = (2S)-2-isopropylmalate. The protein operates within amino-acid biosynthesis; L-leucine biosynthesis; L-leucine from 3-methyl-2-oxobutanoate: step 2/4. Catalyzes the isomerization between 2-isopropylmalate and 3-isopropylmalate, via the formation of 2-isopropylmaleate. This is 3-isopropylmalate dehydratase large subunit from Rippkaea orientalis (strain PCC 8801 / RF-1) (Cyanothece sp. (strain PCC 8801)).